The sequence spans 300 residues: Transcriptional dual regulator GltC (300 aa).

An HTH lysR-type domain is found at 1–58 (MELRQLRYFMEVAEREHVSEAADHLHVAQSAISRQIANLEEELNVTLFEREGRNIKLT). A DNA-binding region (H-T-H motif) is located at residues 18-37 (VSEAADHLHVAQSAISRQIA).

It belongs to the LysR transcriptional regulatory family. In terms of assembly, interacts with gutamate dehydrogenase RocG.

With respect to regulation, activated by alpha-ketoglutarate and inhibited by glutamate and by RocG. In terms of biological role, positive regulator of glutamate biosynthesis (gltAB genes). Negatively regulates its own expression. The protein is Transcriptional dual regulator GltC (gltC) of Bacillus subtilis (strain 168).